The chain runs to 1005 residues: Espin-like protein (1005 aa).

ANK repeat units lie at residues 1 to 31, 35 to 64, 69 to 99, 103 to 132, 136 to 166, 170 to 200, 204 to 234, 238 to 267, 270 to 299, and 303 to 332; these read MEAQQALVASKDGDMATLERLFEAGALRPDI, LGAGLVHHATRAGHLDCVKFLVQRAKLPGN, NGATPVHDAAATGNLAELCWLVRDAGCGLQD, SGVSPLHLAARFGHPALVEWLLREGHAATL, EGALPLHHAAVSGDLTCLKLLTAAHSSGVNQ, SGASPLYLACQEGHLHLAQFLVKDCGADVRL, DGMSSLHAAAAHGHYSLVVWLVTFTDIGLTA, EGATALHFAARGGHTPILDRLLLMGAPIMR, WGGTPLHDAAENGHMECCQTLLSHHVDPFL, and DGYTAIDLAEYHGHQDCAQFLREMSRPVRV. Disordered regions lie at residues 355 to 383 and 458 to 480; these read EERRGDSGLKSPSSATLSPVWPAQPVPRE and ADHPPEDQDQSQRQDSGPTAAEQ. Positions 458–469 are enriched in basic and acidic residues; that stretch reads ADHPPEDQDQSQ. Residues 502–539 adopt a coiled-coil conformation; the sequence is EDDLVYLEKQINDLQLRRRCQEYESELGRLAAQLQALL. Disordered regions lie at residues 611–643, 692–729, 764–794, and 951–975; these read LAQGEEKPPSPVPQDLGKETIAGPSRSEAQREI, PRGDAMGGEPGPGDTEEASDSGISCEEAPSEAGAGPGL, LEAQRARSRGPEAAGSPRPSSPQPSDGPRLG, and PHASLPGSGPEPAVPPRLGSDSQGS.

In terms of assembly, interacts with MYO3A (via C-terminus). Interacts with MYO3B (via C-terminus). In terms of tissue distribution, expressed in inner ear hair cells. Expressed in utricle hair bundles (at protein level). Expressed in choclea (at protein level).

It is found in the cell projection. The protein resides in the stereocilium. Functionally, binds to but does not cross-link actin. Required for the formation and maintenance of inner ear hair cell stereocilia and staircase formation. Essential for normal hearing. The chain is Espin-like protein (Espnl) from Mus musculus (Mouse).